A 500-amino-acid chain; its full sequence is Carnosic acid synthase (500 aa).

Residues Leu4–Pro24 form a helical membrane-spanning segment. A heme-binding site is contributed by Cys443.

This sequence belongs to the cytochrome P450 family. Heme serves as cofactor. In terms of tissue distribution, expressed in leaf glandular trichomes.

The protein localises to the membrane. The enzyme catalyses 11-hydroxyferruginol + 3 reduced [NADPH--hemoprotein reductase] + 3 O2 = carnosate + 3 oxidized [NADPH--hemoprotein reductase] + 4 H2O + 4 H(+). It carries out the reaction miltiradiene + 2 reduced [NADPH--hemoprotein reductase] + 2 O2 = miltiradien-20-al + 2 oxidized [NADPH--hemoprotein reductase] + 3 H2O + 2 H(+). It catalyses the reaction ferruginol + 3 reduced [NADPH--hemoprotein reductase] + 3 O2 = pisiferate + 3 oxidized [NADPH--hemoprotein reductase] + 4 H2O + 4 H(+). Its pathway is secondary metabolite biosynthesis; terpenoid biosynthesis. Monooxygenase involved in the biosynthesis of carnosate, a potent antioxidant labdane-related diterpene natural product. Catalyzes the oxidation of 11-hydroxyferruginol to produce carnosate. Mediates the conversion of miltiradien into miltiradien-20-al. Also involved in the production of pisiferic acid and derivative products from ferruginol. The sequence is that of Carnosic acid synthase from Salvia pomifera (Apple sage).